The chain runs to 155 residues: Ribonuclease H (155 aa).

The RNase H type-1 domain maps to 4 to 145 (DISKVVIYTD…ADKLAVQGRQ (142 aa)). Residues Asp-13, Glu-51, Asp-73, and Asp-137 each contribute to the Mg(2+) site.

The protein belongs to the RNase H family. Monomer. It depends on Mg(2+) as a cofactor.

It is found in the cytoplasm. It carries out the reaction Endonucleolytic cleavage to 5'-phosphomonoester.. In terms of biological role, endonuclease that specifically degrades the RNA of RNA-DNA hybrids. In Rickettsia bellii (strain RML369-C), this protein is Ribonuclease H.